The chain runs to 101 residues: Putative pterin-4-alpha-carbinolamine dehydratase (101 aa).

This sequence belongs to the pterin-4-alpha-carbinolamine dehydratase family.

The enzyme catalyses (4aS,6R)-4a-hydroxy-L-erythro-5,6,7,8-tetrahydrobiopterin = (6R)-L-erythro-6,7-dihydrobiopterin + H2O. This Nitrobacter hamburgensis (strain DSM 10229 / NCIMB 13809 / X14) protein is Putative pterin-4-alpha-carbinolamine dehydratase.